Consider the following 165-residue polypeptide: Ubiquitin-like protein 4B (165 aa).

The Ubiquitin-like domain maps to 1-76 (MFLTVKLLLG…ISVVVRPLEK (76 aa)). The segment at 139–165 (EPLAQPTGEREPEVLSPNKEEEKEAVQ) is disordered. Residues 146–165 (GEREPEVLSPNKEEEKEAVQ) are compositionally biased toward basic and acidic residues.

It is found in the cytoplasm. The chain is Ubiquitin-like protein 4B (UBL4B) from Bos taurus (Bovine).